Here is a 216-residue protein sequence, read N- to C-terminus: Protein ORM2 (216 aa).

Positions 1–50 are disordered; the sequence is MIDRTKNESPAFEESPLTPNVSNLKPFPSQSNKISTPVTDHRRRRSSSVI. Residues 1-78 are Cytoplasmic-facing; the sequence is MIDRTKNESP…NMNATWVDQR (78 aa). Ser-9 and Ser-15 each carry phosphoserine. Over residues 17–38 the composition is skewed to polar residues; the sequence is LTPNVSNLKPFPSQSNKISTPV. Thr-18 bears the Phosphothreonine mark. Phosphoserine is present on residues Ser-22, Ser-29, and Ser-51. Residues 79–99 traverse the membrane as a helical segment; that stretch reads GAWLIHIVVIVLLRLFYSLFG. The Extracellular segment spans residues 100-103; sequence STPK. The helical transmembrane segment at 104-124 threads the bilayer; the sequence is WTWTLTNMTYIIGFYIMFHLV. Topologically, residues 125-148 are cytoplasmic; sequence KGTPFDFNGGAYDNLTMWEQINDE. A helical membrane pass occupies residues 149–169; that stretch reads TLYTPTRKFLLIVPIVLFLIS. Residues 170–177 lie on the Extracellular side of the membrane; it reads NQYYRNDM. Residues 178–198 form a helical membrane-spanning segment; it reads TLFLSNLAVTVLIGVVPKLGI. Residues 199–216 are Cytoplasmic-facing; the sequence is THRLRISIPGITGRAQIS.

Belongs to the ORM family. Component of the SPOTS complex, at least composed of LCB1/2 (LCB1 and/or LCB2), ORM1/2 (ORM1 and/or ORM2), SAC1 and TSC3. Phosphorylated in case of disruption of sphingolipid synthesis. Phosphorylation regulates the inhibitory activity of serine palmitoyltransferases (LCB1 and LCB2).

The protein localises to the endoplasmic reticulum membrane. In terms of biological role, component of the SPOTS complex that acts as a negative regulator of sphingolipid synthesis. Acts by inhibiting serine palmitoyltransferases (LCB1 and LCB2) activity. Along with ORM1, plays a role in the phosphorylation of LAC1 and YPK1, the distribution of actin patches between mother and daughter cells, and in endocytosis. The polypeptide is Protein ORM2 (ORM2) (Saccharomyces cerevisiae (strain ATCC 204508 / S288c) (Baker's yeast)).